The primary structure comprises 34 residues: Photosystem II reaction center protein Psb30 (34 aa).

The chain crosses the membrane as a helical span at residues 5 to 25 (VLFQLTALIFVVAAGPLVIVL).

The protein belongs to the Psb30/Ycf12 family. As to quaternary structure, PSII is composed of 1 copy each of membrane proteins PsbA, PsbB, PsbC, PsbD, PsbE, PsbF, PsbH, PsbI, PsbJ, PsbK, PsbL, PsbM, PsbT, PsbX, PsbY, PsbZ, Psb30/Ycf12, peripheral proteins of the oxygen-evolving complex and a large number of cofactors. It forms dimeric complexes.

The protein resides in the plastid. Its subcellular location is the chloroplast thylakoid membrane. In terms of biological role, a core subunit of photosystem II (PSII), probably helps stabilize the reaction center. The protein is Photosystem II reaction center protein Psb30 of Tupiella akineta (Green alga).